Reading from the N-terminus, the 346-residue chain is N-acetyl-gamma-glutamyl-phosphate reductase (346 aa).

C149 is a catalytic residue.

This sequence belongs to the NAGSA dehydrogenase family. Type 1 subfamily.

It localises to the cytoplasm. It catalyses the reaction N-acetyl-L-glutamate 5-semialdehyde + phosphate + NADP(+) = N-acetyl-L-glutamyl 5-phosphate + NADPH + H(+). It participates in amino-acid biosynthesis; L-arginine biosynthesis; N(2)-acetyl-L-ornithine from L-glutamate: step 3/4. Its function is as follows. Catalyzes the NADPH-dependent reduction of N-acetyl-5-glutamyl phosphate to yield N-acetyl-L-glutamate 5-semialdehyde. This chain is N-acetyl-gamma-glutamyl-phosphate reductase, found in Citrifermentans bemidjiense (strain ATCC BAA-1014 / DSM 16622 / JCM 12645 / Bem) (Geobacter bemidjiensis).